The sequence spans 487 residues: Multiple inositol polyphosphate phosphatase 1 (487 aa).

The first 30 residues, 1 to 30 (MLRAPGCLLRTSVAPAAALAAALLSSLARC), serve as a signal peptide directing secretion. H89 is a catalytic residue. N-linked (GlcNAc...) asparagine glycans are attached at residues N242 and N481. Positions 484–487 (SDEL) match the Prevents secretion from ER motif.

The protein belongs to the histidine acid phosphatase family. MINPP1 subfamily. Post-translationally, N-glycosylated. In terms of tissue distribution, widely expressed with highest levels in kidney, liver, cerebellum and placenta.

It is found in the endoplasmic reticulum lumen. The protein localises to the secreted. Its subcellular location is the cell membrane. The enzyme catalyses 1D-myo-inositol hexakisphosphate + H2O = 1D-myo-inositol 1,2,4,5,6-pentakisphosphate + phosphate. The catalysed reaction is 1D-myo-inositol 1,2,4,5,6-pentakisphosphate + H2O = 1D-myo-inositol 1,2,5,6-tetrakisphosphate + phosphate. It carries out the reaction 1D-myo-inositol 1,2,5,6-tetrakisphosphate + H2O = 1D-myo-inositol 1,2,6-trisphosphate + phosphate. It catalyses the reaction 1D-myo-inositol 1,2,6-trisphosphate + H2O = 1D-myo-inositol 1,2-bisphosphate + phosphate. The enzyme catalyses 1D-myo-inositol 1,2-bisphosphate + H2O = 1D-myo-inositol 2-phosphate + phosphate. The catalysed reaction is 1D-myo-inositol hexakisphosphate + H2O = 1D-myo-inositol 1,2,3,5,6-pentakisphosphate + phosphate. It carries out the reaction 1D-myo-inositol 1,2,3,5,6-pentakisphosphate + H2O = 1D-myo-inositol 1,2,3,6-tetrakisphosphate + phosphate. It catalyses the reaction 1D-myo-inositol 1,2,3,6-tetrakisphosphate + H2O = 1D-myo-inositol 1,2,3-trisphosphate + phosphate. The enzyme catalyses 1D-myo-inositol 1,2,3-trisphosphate + H2O = 1D-myo-inositol 2,3-bisphosphate + phosphate. The catalysed reaction is 1D-myo-inositol 2,3-bisphosphate + H2O = 1D-myo-inositol 2-phosphate + phosphate. It carries out the reaction 1D-myo-inositol 1,3,4,5,6-pentakisphosphate + H2O = 1D-myo-inositol 1,4,5,6-tetrakisphosphate + phosphate. It catalyses the reaction 1D-myo-inositol 1,4,5,6-tetrakisphosphate + H2O = 1D-myo-inositol 1,4,5-trisphosphate + phosphate. The enzyme catalyses (2R)-2,3-bisphosphoglycerate + H2O = (2R)-2-phosphoglycerate + phosphate. Its function is as follows. Multiple inositol polyphosphate phosphatase that hydrolyzes 1D-myo-inositol 1,3,4,5,6-pentakisphosphate (InsP5[2OH]) and 1D-myo-inositol hexakisphosphate (InsP6) to a range of less phosphorylated inositol phosphates. This regulates the availability of these various small molecule second messengers and metal chelators which control many aspects of cell physiology. Has a weak in vitro activity towards 1D-myo-inositol 1,4,5-trisphosphate which is unlikely to be physiologically relevant. By regulating intracellular inositol polyphosphates pools, which act as metal chelators, it may control the availability of intracellular calcium and iron, which are important for proper neuronal development and homeostasis. May have a dual substrate specificity, and function as a 2,3-bisphosphoglycerate 3-phosphatase hydrolyzing 2,3-bisphosphoglycerate to 2-phosphoglycerate. 2,3-bisphosphoglycerate (BPG) is formed as part of the Rapoport-Luebering glycolytic bypass and is a regulator of systemic oxygen homeostasis as the major allosteric effector of hemoglobin. The polypeptide is Multiple inositol polyphosphate phosphatase 1 (Homo sapiens (Human)).